A 756-amino-acid polypeptide reads, in one-letter code: MSRPGTATPALALVLLAVTLAGVGAQGAALEDPDYYGQEIWSREPYYARPEPELETFSPPLPAGPGEEWERRPQEPRPPKRATKPKKAPKREKSAPEPPPPGKHSNKKVMRTKSSEKAANDDHSVRVAREDVRESCPPLGLETLKITDFQLHASTVKRYGLGAHRGRLNIQAGINENDFYDGAWCAGRNDLQQWIEVDARRLTRFTGVITQGRNSLWLSDWVTSYKVMVSNDSHTWVTVKNGSGDMIFEGNSEKEIPVLNELPVPMVARYIRINPQSWFDNGSICMRMEILGCPLPDPNNYYHRRNEMTTTDDLDFKHHNYKEMRQLMKVVNEMCPNITRIYNIGKSHQGLKLYAVEISDHPGEHEVGEPEFHYIAGAHGNEVLGRELLLLLVQFVCQEYLARNARIVHLVEETRIHVLPSLNPDGYEKAYEGGSELGGWSLGRWTHDGIDINNNFPDLNTLLWEAEDRQNVPRKVPNHYIAIPEWFLSENATVAAETRAVIAWMEKIPFVLGGNLQGGELVVAYPYDLVRSPWKTQEHTPTPDDHVFRWLAYSYASTHRLMTDARRRVCHTEDFQKEEGTVNGASWHTVAGSLNDFSYLHTNCFELSIYVGCDKYPHESQLPEEWENNRESLIVFMEQVHRGIKGLVRDSHGKGIPNAIISVEGINHDIRTANDGDYWRLLNPGEYVVTAKAEGFTASTKNCMVGYDMGATRCDFTLSKTNMARIREIMEKFGKQPVSLPARRLKLRGQKRRQRG.

The signal sequence occupies residues 1–25; sequence MSRPGTATPALALVLLAVTLAGVGA. The disordered stretch occupies residues 51 to 131; that stretch reads EPELETFSPP…DHSVRVARED (81 aa). Positions 68–78 are enriched in basic and acidic residues; it reads EWERRPQEPRP. The span at 79 to 90 shows a compositional bias: basic residues; that stretch reads PKRATKPKKAPK. Positions 113–131 are enriched in basic and acidic residues; that stretch reads KSSEKAANDDHSVRVARED. Residues 134-293 form the F5/8 type C domain; it reads ESCPPLGLET…ICMRMEILGC (160 aa). An intrachain disulfide couples Cys136 to Cys293. N-linked (GlcNAc...) asparagine glycans are attached at residues Asn231, Asn241, Asn281, Asn337, and Asn491. In terms of domain architecture, Peptidase M14 spans 317 to 640; sequence KHHNYKEMRQ…ESLIVFMEQV (324 aa).

The protein belongs to the peptidase M14 family.

Its subcellular location is the secreted. Functionally, may be involved in cell-cell interactions. This is Inactive carboxypeptidase-like protein X2 (CPXM2) from Homo sapiens (Human).